Consider the following 320-residue polypeptide: Ferrochelatase (320 aa).

H194 and E275 together coordinate Fe cation.

Belongs to the ferrochelatase family. Monomer.

It localises to the cytoplasm. It catalyses the reaction heme b + 2 H(+) = protoporphyrin IX + Fe(2+). It participates in porphyrin-containing compound metabolism; protoheme biosynthesis; protoheme from protoporphyrin-IX: step 1/1. Catalyzes the ferrous insertion into protoporphyrin IX. The polypeptide is Ferrochelatase (Salmonella dublin (strain CT_02021853)).